The following is a 430-amino-acid chain: Aspartate aminotransferase, mitochondrial (430 aa).

The transit peptide at 1–29 (MALLHSSRILSGMAAAFHPGLAAAASARA) directs the protein to the mitochondrion. Residue T48 is modified to Phosphothreonine. Residue K59 is modified to N6-acetyllysine. G65 provides a ligand contact to substrate. K73 carries the N6-acetyllysine; alternate modification. Residue K73 is modified to N6-succinyllysine; alternate. At K82 the chain carries N6-acetyllysine. K90 carries the post-translational modification N6-acetyllysine; alternate. Position 90 is an N6-succinyllysine; alternate (K90). The residue at position 96 (Y96) is a 3'-nitrotyrosine; alternate. Phosphotyrosine; alternate is present on Y96. N6-acetyllysine; alternate occurs at positions 107 and 122. Residues K107 and K122 each carry the N6-succinyllysine; alternate modification. A Phosphoserine modification is found at S143. K159 is modified (N6-acetyllysine; alternate). Residue K159 is modified to N6-succinyllysine; alternate. Position 162 (W162) interacts with substrate. K185 is modified (N6-acetyllysine; alternate). An N6-succinyllysine; alternate modification is found at K185. N215 contacts substrate. K227 is modified (N6-succinyllysine). K234 bears the N6-acetyllysine mark. K279 and K296 each carry N6-acetyllysine; alternate. Residue K279 is modified to N6-(pyridoxal phosphate)lysine; alternate. At K296 the chain carries N6-succinyllysine; alternate. K302 carries the post-translational modification N6-acetyllysine. N6-acetyllysine; alternate is present on K309. N6-succinyllysine; alternate is present on K309. R313 carries the post-translational modification Asymmetric dimethylarginine. K338 is modified (N6-acetyllysine; alternate). K338 carries the post-translational modification N6-succinyllysine; alternate. At K345 the chain carries N6-acetyllysine. The residue at position 363 (K363) is an N6-acetyllysine; alternate. The residue at position 363 (K363) is an N6-succinyllysine; alternate. N6-acetyllysine is present on residues K364 and K387. N6-acetyllysine; alternate is present on residues K396 and K404. 2 positions are modified to N6-succinyllysine; alternate: K396 and K404. R407 contacts substrate.

The protein belongs to the class-I pyridoxal-phosphate-dependent aminotransferase family. In terms of assembly, homodimer. The cofactor is pyridoxal 5'-phosphate. Post-translationally, acetylation of Lys-296, Lys-345 and Lys-363 is observed in liver mitochondria from fasted mice but not from fed mice. Detected in brain (at protein level).

The protein resides in the mitochondrion matrix. The protein localises to the cell membrane. The enzyme catalyses L-aspartate + 2-oxoglutarate = oxaloacetate + L-glutamate. The catalysed reaction is L-kynurenine + 2-oxoglutarate = kynurenate + L-glutamate + H2O. In terms of biological role, catalyzes the irreversible transamination of the L-tryptophan metabolite L-kynurenine to form kynurenic acid (KA). As a member of the malate-aspartate shuttle, it has a key role in the intracellular NAD(H) redox balance. Is important for metabolite exchange between mitochondria and cytosol, and for amino acid metabolism. Facilitates cellular uptake of long-chain free fatty acids. This Mus musculus (Mouse) protein is Aspartate aminotransferase, mitochondrial (Got2).